The following is a 317-amino-acid chain: uncharacterized protein (317 aa).

A run of 7 helical transmembrane segments spans residues 18 to 38 (WWII…LIII), 58 to 78 (IIFG…GFIF), 92 to 112 (FLGH…WWSV), 130 to 150 (LFAT…AFGV), 165 to 185 (QPLS…KGEL), 202 to 222 (LAFL…LSTV), and 253 to 273 (LWGG…LMVN).

It belongs to the CbiQ family.

The protein resides in the cell membrane. This is an uncharacterized protein from Mycoplasma pneumoniae (strain ATCC 29342 / M129 / Subtype 1) (Mycoplasmoides pneumoniae).